The sequence spans 280 residues: Nuclear egress protein 1 (280 aa).

The CCCH-type zinc finger occupies 86–203 (CLTLSPYGHS…YIIFTSLTLH (118 aa)).

Belongs to the herpesviridae NEC1 protein family. In terms of assembly, forms a heterohexameric complex with NEC2. Interacts with capsid vertex specific component 2/CVC2; this interaction directs the capsid to the host inner nuclear membrane to initiate budding. Phosphorylated at serine residues in the N-terminus. This phosphorylation regulates the localization within the inner nuclear membrane.

The protein localises to the host nucleus inner membrane. Plays an essential role in virion nuclear egress, the first step of virion release from infected cell. Within the host nucleus, NEC1 interacts with the newly formed capsid through the vertexes and directs it to the inner nuclear membrane by associating with NEC2. Induces the budding of the capsid at the inner nuclear membrane as well as its envelopment into the perinuclear space. There, the NEC1/NEC2 complex promotes the fusion of the enveloped capsid with the outer nuclear membrane and the subsequent release of the viral capsid into the cytoplasm where it will reach the secondary budding sites in the host Golgi or trans-Golgi network. The polypeptide is Nuclear egress protein 1 (Alcelaphine herpesvirus 1 (strain C500) (AlHV-1)).